Here is a 253-residue protein sequence, read N- to C-terminus: tRNA pseudouridine synthase A (253 aa).

D53 acts as the Nucleophile in catalysis. Y112 lines the substrate pocket.

The protein belongs to the tRNA pseudouridine synthase TruA family. Homodimer.

The enzyme catalyses uridine(38/39/40) in tRNA = pseudouridine(38/39/40) in tRNA. Its function is as follows. Formation of pseudouridine at positions 38, 39 and 40 in the anticodon stem and loop of transfer RNAs. The protein is tRNA pseudouridine synthase A of Lactococcus lactis subsp. lactis (strain IL1403) (Streptococcus lactis).